Consider the following 794-residue polypeptide: Protein IQ-DOMAIN 32 (794 aa).

The tract at residues 15-101 (CSGGDDTSAD…QSFSVDEKKS (87 aa)) is disordered. Polar residues-rich tracts occupy residues 23–33 (ADPNSTALENK) and 56–65 (SVVSETTPAS). Phosphoserine occurs at positions 78, 80, 142, 193, and 195. The span at 80–95 (SPDNNNVSEKQQQSFS) shows a compositional bias: polar residues. IQ domains follow at residues 214–242 (DESV…KVIK) and 243–265 (LQAA…CVQA). Positions 230–241 (ARRELLRSKKVI) are calmodulin-binding. A disordered region spans residues 277-296 (HSTKDGSRVSATSDKSEPNA). A Phosphoserine modification is found at Ser369. Residues 375 to 417 (VNSDSTVENKTETDMPSYEASKVEGQNVELSETEKMSQYDSPE) form a disordered region. Position 459 is a phosphoserine (Ser459). Disordered stretches follow at residues 472–555 (ELTS…RVEA) and 578–794 (ATSM…KWQR). The span at 473–486 (LTSSTGSNKAMTLS) shows a compositional bias: polar residues. Over residues 487-500 (SKDDVLGEEGKTDI) the composition is skewed to basic and acidic residues. Ser502 and Ser544 each carry phosphoserine. Composition is skewed to basic and acidic residues over residues 539–555 (TLEK…RVEA) and 585–607 (EDPK…HHEP). Residues 643–654 (SQATPASQASSS) show a composition bias toward low complexity. A Nuclear localization signal motif is present at residues 657–664 (ARKGKSEK). Residues 768-786 (NGKQVSPRIQRSASQAQQG) show a composition bias toward polar residues.

It belongs to the IQD family. In terms of assembly, binds to multiple calmodulin (CaM) in the presence of Ca(2+) and CaM-like proteins.

Its subcellular location is the nucleus. It localises to the cytoplasm. The protein localises to the cytoskeleton. Its function is as follows. May be involved in cooperative interactions with calmodulins or calmodulin-like proteins. Recruits calmodulin proteins to microtubules, thus being a potential scaffold in cellular signaling and trafficking. May associate with nucleic acids and regulate gene expression at the transcriptional or post-transcriptional level. The polypeptide is Protein IQ-DOMAIN 32 (Arabidopsis thaliana (Mouse-ear cress)).